The sequence spans 1243 residues: DNA polymerase II large subunit (1243 aa).

The protein belongs to the archaeal DNA polymerase II family. As to quaternary structure, heterodimer of a large subunit and a small subunit.

It catalyses the reaction DNA(n) + a 2'-deoxyribonucleoside 5'-triphosphate = DNA(n+1) + diphosphate. The catalysed reaction is Exonucleolytic cleavage in the 3'- to 5'-direction to yield nucleoside 5'-phosphates.. Functionally, possesses two activities: a DNA synthesis (polymerase) and an exonucleolytic activity that degrades single-stranded DNA in the 3'- to 5'-direction. Has a template-primer preference which is characteristic of a replicative DNA polymerase. The protein is DNA polymerase II large subunit of Nanoarchaeum equitans (strain Kin4-M).